The chain runs to 96 residues: Small ribosomal subunit protein bS16 (96 aa).

It belongs to the bacterial ribosomal protein bS16 family.

This is Small ribosomal subunit protein bS16 from Vesicomyosocius okutanii subsp. Calyptogena okutanii (strain HA).